Here is a 451-residue protein sequence, read N- to C-terminus: 3-carboxy-cis,cis-muconate cycloisomerase (451 aa).

It belongs to the class-II fumarase/aspartase family.

It catalyses the reaction 2-(carboxymethyl)-5-oxo-2,5-dihydro-2-furoate = 3-carboxy-cis,cis-muconate + H(+). Catalyzes an anti cycloisomerization. This Bradyrhizobium diazoefficiens (strain JCM 10833 / BCRC 13528 / IAM 13628 / NBRC 14792 / USDA 110) protein is 3-carboxy-cis,cis-muconate cycloisomerase (pcaB).